Here is a 213-residue protein sequence, read N- to C-terminus: ATP-dependent Clp protease proteolytic subunit (213 aa).

The active-site Nucleophile is the Ser114. His139 is an active-site residue.

Belongs to the peptidase S14 family. In terms of assembly, fourteen ClpP subunits assemble into 2 heptameric rings which stack back to back to give a disk-like structure with a central cavity, resembling the structure of eukaryotic proteasomes.

Its subcellular location is the cytoplasm. It carries out the reaction Hydrolysis of proteins to small peptides in the presence of ATP and magnesium. alpha-casein is the usual test substrate. In the absence of ATP, only oligopeptides shorter than five residues are hydrolyzed (such as succinyl-Leu-Tyr-|-NHMec, and Leu-Tyr-Leu-|-Tyr-Trp, in which cleavage of the -Tyr-|-Leu- and -Tyr-|-Trp bonds also occurs).. Its function is as follows. Cleaves peptides in various proteins in a process that requires ATP hydrolysis. Has a chymotrypsin-like activity. Plays a major role in the degradation of misfolded proteins. This is ATP-dependent Clp protease proteolytic subunit from Methylobacillus flagellatus (strain ATCC 51484 / DSM 6875 / VKM B-1610 / KT).